The primary structure comprises 383 residues: Ribosomal RNA large subunit methyltransferase G (383 aa).

The protein belongs to the methyltransferase superfamily. RlmG family.

It localises to the cytoplasm. The enzyme catalyses guanosine(1835) in 23S rRNA + S-adenosyl-L-methionine = N(2)-methylguanosine(1835) in 23S rRNA + S-adenosyl-L-homocysteine + H(+). Specifically methylates the guanine in position 1835 (m2G1835) of 23S rRNA. The sequence is that of Ribosomal RNA large subunit methyltransferase G from Shewanella amazonensis (strain ATCC BAA-1098 / SB2B).